Here is a 165-residue protein sequence, read N- to C-terminus: Cyclic pyranopterin monophosphate synthase (165 aa).

Substrate is bound by residues 76 to 78 and 114 to 115; these read LCH and ME. Aspartate 129 is an active-site residue.

Belongs to the MoaC family. In terms of assembly, homohexamer; trimer of dimers.

It carries out the reaction (8S)-3',8-cyclo-7,8-dihydroguanosine 5'-triphosphate = cyclic pyranopterin phosphate + diphosphate. It participates in cofactor biosynthesis; molybdopterin biosynthesis. Functionally, catalyzes the conversion of (8S)-3',8-cyclo-7,8-dihydroguanosine 5'-triphosphate to cyclic pyranopterin monophosphate (cPMP). The protein is Cyclic pyranopterin monophosphate synthase of Brucella melitensis biotype 2 (strain ATCC 23457).